Here is a 467-residue protein sequence, read N- to C-terminus: Asparagine--tRNA ligase (467 aa).

The protein belongs to the class-II aminoacyl-tRNA synthetase family. In terms of assembly, homodimer.

The protein localises to the cytoplasm. The catalysed reaction is tRNA(Asn) + L-asparagine + ATP = L-asparaginyl-tRNA(Asn) + AMP + diphosphate + H(+). This Legionella pneumophila (strain Corby) protein is Asparagine--tRNA ligase.